The chain runs to 242 residues: UPF0309 protein BSUIS_B0903 (242 aa).

Positions 30–214 (AADLIAAAAR…ARLVGEGDAP (185 aa)) constitute an SIS domain.

The protein belongs to the UPF0309 family.

This Brucella suis (strain ATCC 23445 / NCTC 10510) protein is UPF0309 protein BSUIS_B0903.